A 292-amino-acid chain; its full sequence is AhcY transcriptional activator HvrB (292 aa).

One can recognise an HTH lysR-type domain in the interval 10-67 (PPLTALRAFAATASEGGFSAAARKLNVTHAAIAQQVRALEADLDVPLVWRDGKHLHLT). A DNA-binding region (H-T-H motif) is located at residues 27–46 (FSAAARKLNVTHAAIAQQVR).

This sequence belongs to the LysR transcriptional regulatory family.

In terms of biological role, functions as a low-light activator of ahcY expression (gene for S-adenosyl-L-homocysteine hydrolase) and as a high-light activator of an uncharacterized 21.6 kDa protein in the ahcY-hvrB intergenic region (orf5). It is also a negative regulator of its own expression. This chain is AhcY transcriptional activator HvrB (hvrB), found in Rhodobacter capsulatus (strain ATCC BAA-309 / NBRC 16581 / SB1003).